Reading from the N-terminus, the 492-residue chain is WD repeat-containing protein JIP5 (492 aa).

WD repeat units follow at residues 127-166, 178-217, 236-274, 276-317, and 365-405; these read RHKG…VVKK, KKND…LSNS, RSAY…ILIS, DQED…LEDQ, and RNHN…VEEN. 2 stretches are compositionally biased toward acidic residues: residues 404 to 414 and 422 to 433; these read ENASVESDSDE and DLSDDTSSDDET. The interval 404–472 is disordered; it reads ENASVESDSD…SKSVKKRKIM (69 aa). The span at 449-462 shows a compositional bias: basic and acidic residues; the sequence is KDLKEDHQEEKESN.

The protein belongs to the WD repeat WDR55 family. As to quaternary structure, interacts with BRE1, BUD27 and GIS1.

The protein localises to the nucleus. It is found in the nucleolus. The polypeptide is WD repeat-containing protein JIP5 (JIP5) (Saccharomyces cerevisiae (strain YJM789) (Baker's yeast)).